The sequence spans 552 residues: MPSSRIPALCLGAWLLLLLLPRFARAEGAVPIPVTCFTRGLDIRKEKADVLCPGGCSLEEFSVFGNIVYASVSSICGAAVHRGVIGTSGGPVRVYSLPGRENYSSVDANGIQSQMLSRWSASFAVTKGKSSTQEATGRAVSTAHPPSGKRLKKTPEKKTGNKDCKADIAFLIDGSFNIGQRRFNLQKNFVGKVALMLGIGTEGPHVGLVQASEHPKIEFYLKNFTSAKDVLFAIKEVGFRGGNSNTGKALKHTAQKFFTADTGVRKGIPKVVVVFIDGWPSDDIEEAGIVAREFGVNVFIVSVAKPIPEELGMVQDVAFVDKAVCRNNGFFSYHMPNWFGTTKYVKPLVQKLCTHEQMMCSKTCYNSVNIAFLIDGSSSVGDSNFRLMLEFVSNIAKTFEISDIGAKIAAVQFTYDQRTEFSFTDYNTKENVLAVLANIRYMSGGTATGDAIAFTVRNVFGPIRDSPNKNFLVIVTDGQSYDDVRGPAAAAHDAGITIFSVGVAWAPLDDLRDMASKPKESHAFFTREFTGLEPIVSDVIRGICRDFLESQQ.

The signal sequence occupies residues 1 to 26; that stretch reads MPSSRIPALCLGAWLLLLLLPRFARA. An LCCL domain is found at 30-123; that stretch reads VPIPVTCFTR…QMLSRWSASF (94 aa). 2 disulfides stabilise this stretch: Cys36/Cys52 and Cys56/Cys76. Asn102 is a glycosylation site (N-linked (GlcNAc...) asparagine). The tract at residues 129–161 is disordered; that stretch reads KSSTQEATGRAVSTAHPPSGKRLKKTPEKKTGN. VWFA domains lie at 167–352 and 369–539; these read DIAF…VQKL and NIAF…VSDV. A glycan (N-linked (GlcNAc...) asparagine) is linked at Asn223.

As to quaternary structure, monomer. May form homodimer. Interacts with type II collagen. Interacts with SLC44A2. Interacts with ANXA2. N-glycosylated. As to expression, expressed in inner ear structures.

The protein localises to the secreted. Its subcellular location is the extracellular space. Plays a role in the control of cell shape and motility in the trabecular meshwork. This is Cochlin (Coch) from Mus musculus (Mouse).